The chain runs to 284 residues: 4-diphosphocytidyl-2-C-methyl-D-erythritol kinase (284 aa).

Lys14 is an active-site residue. Position 98–108 (98–108 (PMGGGLGGGSS)) interacts with ATP. Asp140 is an active-site residue.

This sequence belongs to the GHMP kinase family. IspE subfamily.

The catalysed reaction is 4-CDP-2-C-methyl-D-erythritol + ATP = 4-CDP-2-C-methyl-D-erythritol 2-phosphate + ADP + H(+). It functions in the pathway isoprenoid biosynthesis; isopentenyl diphosphate biosynthesis via DXP pathway; isopentenyl diphosphate from 1-deoxy-D-xylulose 5-phosphate: step 3/6. Catalyzes the phosphorylation of the position 2 hydroxy group of 4-diphosphocytidyl-2C-methyl-D-erythritol. In Shewanella baltica (strain OS155 / ATCC BAA-1091), this protein is 4-diphosphocytidyl-2-C-methyl-D-erythritol kinase.